The chain runs to 145 residues: Protein SprT-like (145 aa).

The 137-residue stretch at 4 to 140 folds into the SprT-like domain; it reads TNYVQEVSLA…VCGNCHGKLI (137 aa). His64 lines the Zn(2+) pocket. Glu65 is a catalytic residue. His68 serves as a coordination point for Zn(2+).

The protein belongs to the SprT family. Requires Zn(2+) as cofactor.

It localises to the cytoplasm. The chain is Protein SprT-like from Streptococcus pyogenes serotype M18 (strain MGAS8232).